The chain runs to 285 residues: Alginate lyase (285 aa).

The signal sequence occupies residues 1-20 (MIKSNLVISSLAIVSSMSYA).

The protein belongs to the polysaccharide lyase 6 family.

It catalyses the reaction Eliminative cleavage of alginate to give oligosaccharides with 4-deoxy-alpha-L-erythro-hex-4-enuronosyl groups at their non-reducing ends and beta-D-mannuronate at their reducing end.. The chain is Alginate lyase (alxM) from Photobacterium sp. (strain ATCC 43367).